The following is a 379-amino-acid chain: Flap endonuclease 1 (379 aa).

Residues 1 to 105 form an N-domain region; that stretch reads MGIKGLTKLL…QELAKRYSKR (105 aa). Asp-34 serves as a coordination point for Mg(2+). A DNA-binding site is contributed by Arg-71. Residues Asp-87, Glu-159, Glu-161, Asp-180, and Asp-182 each contribute to the Mg(2+) site. Residues 123–254 are I-domain; it reads AIEKLSKRTV…QTALKLIRQH (132 aa). Glu-159 is a binding site for DNA. Gly-232 and Asp-234 together coordinate DNA. A Mg(2+)-binding site is contributed by Asp-234. The tract at residues 331–379 is disordered; sequence AKNKSSQGRLESFFKPTATTSAPLKRKETSDKTSKAAANKKTKAGGKKK. An interaction with PCNA region spans residues 336–344; the sequence is SQGRLESFF. The segment covering 355 to 364 has biased composition (basic and acidic residues); the sequence is KRKETSDKTS. Over residues 368–379 the composition is skewed to basic residues; that stretch reads ANKKTKAGGKKK.

It belongs to the XPG/RAD2 endonuclease family. FEN1 subfamily. As to quaternary structure, interacts with PCNA. Three molecules of FEN1 bind to one PCNA trimer with each molecule binding to one PCNA monomer. PCNA stimulates the nuclease activity without altering cleavage specificity. The cofactor is Mg(2+). Post-translationally, phosphorylated. Phosphorylation upon DNA damage induces relocalization to the nuclear plasma.

Its subcellular location is the nucleus. It is found in the nucleolus. The protein localises to the nucleoplasm. The protein resides in the mitochondrion. Structure-specific nuclease with 5'-flap endonuclease and 5'-3' exonuclease activities involved in DNA replication and repair. During DNA replication, cleaves the 5'-overhanging flap structure that is generated by displacement synthesis when DNA polymerase encounters the 5'-end of a downstream Okazaki fragment. It enters the flap from the 5'-end and then tracks to cleave the flap base, leaving a nick for ligation. Also involved in the long patch base excision repair (LP-BER) pathway, by cleaving within the apurinic/apyrimidinic (AP) site-terminated flap. Acts as a genome stabilization factor that prevents flaps from equilibrating into structures that lead to duplications and deletions. Also possesses 5'-3' exonuclease activity on nicked or gapped double-stranded DNA, and exhibits RNase H activity. Also involved in replication and repair of rDNA and in repairing mitochondrial DNA. The protein is Flap endonuclease 1 of Zea mays (Maize).